A 456-amino-acid polypeptide reads, in one-letter code: Neurexin-3-beta (456 aa).

Residues 1 to 35 (MHLRIHARRNPPRRPAWTLGIWSLFWGCIVSSVWS) form the signal peptide. Residues 36–381 (SSNVASSSSS…EVIRESSSTT (346 aa)) lie on the Extracellular side of the membrane. The interval 41–63 (SSSSSPGSHSQHEHHFHGSKHHS) is disordered. Basic residues predominate over residues 52 to 63 (HEHHFHGSKHHS). In terms of domain architecture, Laminin G-like spans 82-282 (ATYIFGKSGG…NPNIKINGSV (201 aa)). Asp-134 and Ile-151 together coordinate Ca(2+). N-linked (GlcNAc...) asparagine glycosylation is present at Asn-181. Positions 233 and 235 each coordinate Ca(2+). Residues Asn-279 and Asn-323 are each glycosylated (N-linked (GlcNAc...) asparagine). Positions 316–340 (ATTTTRKNRSTASIQPTSDDLVSSA) are disordered. Residues 325 to 340 (STASIQPTSDDLVSSA) show a composition bias toward polar residues. Ser-339 carries O-linked (Xyl...) (heparan sulfate) serine glycosylation. Residues 382-402 (GMVVGIVAAAALCILILLYAM) traverse the membrane as a helical segment. Topologically, residues 403 to 456 (YKYRNRDEGSYQVDETRNYISNSAQSNGTLLKEKPPSSKGGHKKQKNKDKEYYV) are cytoplasmic. A disordered region spans residues 424-456 (NSAQSNGTLLKEKPPSSKGGHKKQKNKDKEYYV).

The protein belongs to the neurexin family. In terms of assembly, weakly interacts with CBLN1 and CBLN2. Very weak binding, if any, to CBLN4. Specific isoforms bind neuroligins NLGN1, NLGN2 and NLGN3. Interacts with CLSTN3. Post-translationally, processed by alpha-secretase leading to the formation of an extracellular soluble protein as well as a C-terminal membrane-embedded fragment (CTF). Proteolysis of these CTFs by gamma-secretase releases intracellular domains (ICDs) and extracellular peptides. In terms of processing, O-glycosylated; contains heparan sulfate. Heparan sulfate attachment is required for synapse development by mediating interactions with neuroligins.

The protein localises to the presynaptic cell membrane. It localises to the secreted. Neuronal cell surface protein that may be involved in cell recognition and cell adhesion. May mediate intracellular signaling. Functions as part of a trans-synaptic complex by binding to cerebellins and postsynaptic GRID1. This interaction helps regulate the activity of NMDA and AMPA receptors at hippocampal synapses without affecting synapse formation. NRXN3B-CBLN2-GRID1 complex transduce presynaptic signals into postsynaptic AMPAR response. The polypeptide is Neurexin-3-beta (NRXN3) (Bos taurus (Bovine)).